A 326-amino-acid polypeptide reads, in one-letter code: Adenine deaminase (326 aa).

H14, H16, and H194 together coordinate Zn(2+). The active-site Proton donor is the E197. A Zn(2+)-binding site is contributed by D275. D276 is a binding site for substrate.

It belongs to the metallo-dependent hydrolases superfamily. Adenosine and AMP deaminases family. Adenine deaminase type 2 subfamily. Zn(2+) serves as cofactor.

It catalyses the reaction adenine + H2O + H(+) = hypoxanthine + NH4(+). Functionally, catalyzes the hydrolytic deamination of adenine to hypoxanthine. Plays an important role in the purine salvage pathway and in nitrogen catabolism. This chain is Adenine deaminase, found in Crocosphaera subtropica (strain ATCC 51142 / BH68) (Cyanothece sp. (strain ATCC 51142)).